The sequence spans 290 residues: Thioredoxin-like protein 1 (290 aa).

In terms of domain architecture, Thioredoxin spans 24–104 (VDCYADWCGP…PQALKEKVAL (81 aa)). Residues C31 and C34 are joined by a disulfide bond. Residues 118-290 (SSSAPVKGFA…SKGKLQKVEA (173 aa)) form the PITH domain.

The protein resides in the cytoplasm. It localises to the nucleus. In terms of biological role, has a role in cellular detoxification of alkyl hydroperoxide. The chain is Thioredoxin-like protein 1 (txl1) from Schizosaccharomyces pombe (strain 972 / ATCC 24843) (Fission yeast).